A 338-amino-acid chain; its full sequence is 2,3-dihydroxybenzoate decarboxylase (338 aa).

The active site involves C251.

It belongs to the metallo-dependent hydrolases superfamily. Homotetramer.

It catalyses the reaction 2,3-dihydroxybenzoate + H(+) = catechol + CO2. Its pathway is aromatic compound metabolism; benzoate degradation via hydroxylation. Has an absolute substrate specificity for 2,3-DHBA. The polypeptide is 2,3-dihydroxybenzoate decarboxylase (Aspergillus oryzae (strain ATCC 42149 / RIB 40) (Yellow koji mold)).